The chain runs to 474 residues: Protein NAR1 (474 aa).

8 residues coordinate [4Fe-4S] cluster: cysteine 24, cysteine 61, cysteine 64, cysteine 67, cysteine 177, cysteine 233, cysteine 390, and cysteine 394.

The protein belongs to the NARF family. In terms of assembly, part of a complex composed of AE7, CIA1, MMS19 and NAR1. Interacts with CIA1. In terms of tissue distribution, expressed in developing tissues, including shoot apex, young leaves, vascular tissues, root tips, pedicels, carpels and developing seeds.

It is found in the nucleus. Its subcellular location is the cytoplasm. In terms of biological role, essential component of the cytosolic iron-sulfur (Fe-S) protein assembly (CIA) machinery. Required for the maturation of extramitochondrial Fe/S proteins. Required for expression of the imprinted FWA gene, for seed development and is involved in the oxidative stress response in vegetative tissues. Involved in the regulation of cell size, ploidy and cell cycle progression. Required for growth under normoxic conditions and necessary for recovery after hypoxic treatment but its action is reactive oxygen species (ROS) independent. The polypeptide is Protein NAR1 (Arabidopsis thaliana (Mouse-ear cress)).